The following is a 154-amino-acid chain: 3-hydroxyacyl-[acyl-carrier-protein] dehydratase FabZ (154 aa).

His55 is a catalytic residue.

It belongs to the thioester dehydratase family. FabZ subfamily.

Its subcellular location is the cytoplasm. The catalysed reaction is a (3R)-hydroxyacyl-[ACP] = a (2E)-enoyl-[ACP] + H2O. Its function is as follows. Involved in unsaturated fatty acids biosynthesis. Catalyzes the dehydration of short chain beta-hydroxyacyl-ACPs and long chain saturated and unsaturated beta-hydroxyacyl-ACPs. The polypeptide is 3-hydroxyacyl-[acyl-carrier-protein] dehydratase FabZ (Nitratidesulfovibrio vulgaris (strain ATCC 29579 / DSM 644 / CCUG 34227 / NCIMB 8303 / VKM B-1760 / Hildenborough) (Desulfovibrio vulgaris)).